The following is a 248-amino-acid chain: Ribosomal RNA small subunit methyltransferase G (248 aa).

Residues Gly93, Leu98, 143-144 (AE), and Arg161 each bind S-adenosyl-L-methionine.

This sequence belongs to the methyltransferase superfamily. RNA methyltransferase RsmG family.

The protein localises to the cytoplasm. In terms of biological role, specifically methylates the N7 position of guanine in position 518 of 16S rRNA. This Mycobacterium leprae (strain Br4923) protein is Ribosomal RNA small subunit methyltransferase G.